A 225-amino-acid chain; its full sequence is Interleukin-6 (225 aa).

An N-terminal signal peptide occupies residues 1-24; the sequence is MPSRLNVFWLCAAALAALLRCAPA. N-linked (GlcNAc...) asparagine glycosylation occurs at Asn-98.

The protein belongs to the IL-6 superfamily. Component of a hexamer of two molecules each of IL6, IL6R and IL6ST; first binds to IL6R to associate with the signaling subunit IL6ST. Expressed in white muscle, skin, spleen, anterior intestine and stomach. Not expressed in brain, gill, head kidney, posterior intestine and adipose tissue.

The protein resides in the secreted. Its function is as follows. Cytokine with a wide variety of biological functions in immunity, tissue regeneration, and metabolism. Binds to IL6R, then the complex associates to the signaling subunit IL6ST/gp130 to trigger the intracellular IL6-signaling pathway. The interaction with the membrane-bound IL6R and IL6ST stimulates 'classic signaling', whereas the binding of IL6 and soluble IL6R to IL6ST stimulates 'trans-signaling'. Alternatively, 'cluster signaling' occurs when membrane-bound IL6:IL6R complexes on transmitter cells activate IL6ST receptors on neighboring receiver cells. In Sparus aurata (Gilthead sea bream), this protein is Interleukin-6 (il6).